Here is a 75-residue protein sequence, read N- to C-terminus: Penaeidin-3m (75 aa).

An N-terminal signal peptide occupies residues 1–19 (MRLVVCLVFLASFALVCQG). Residue Q20 is modified to Pyrrolidone carboxylic acid. 3 cysteine pairs are disulfide-bonded: C44–C59, C48–C66, and C60–C67. At S74 the chain carries Serine amide.

Belongs to the penaeidin family.

The protein resides in the cytoplasmic granule. Functionally, antibacterial and antifungal activity. Presents chitin-binding activity. The sequence is that of Penaeidin-3m from Penaeus setiferus (Atlantic white shrimp).